Here is a 198-residue protein sequence, read N- to C-terminus: Probable GTP-binding protein EngB (198 aa).

An EngB-type G domain is found at 27–198 (DLPEVALAGR…ESWDTILSEL (172 aa)). GTP is bound by residues 35–42 (GRSNVGKS), 62–66 (GKTQL), 80–83 (DVPG), 147–150 (TKAD), and 179–181 (FSS). 2 residues coordinate Mg(2+): S42 and T64.

It belongs to the TRAFAC class TrmE-Era-EngA-EngB-Septin-like GTPase superfamily. EngB GTPase family. Mg(2+) serves as cofactor.

Its function is as follows. Necessary for normal cell division and for the maintenance of normal septation. This chain is Probable GTP-binding protein EngB, found in Streptococcus agalactiae serotype Ia (strain ATCC 27591 / A909 / CDC SS700).